We begin with the raw amino-acid sequence, 307 residues long: Taste receptor type 2 member 41 (307 aa).

Residues 1 to 7 are Extracellular-facing; that stretch reads MQAALTA. Residues 8–28 traverse the membrane as a helical segment; that stretch reads FFMLLFSLLSLLGIAANGFIV. The Cytoplasmic segment spans residues 29–40; that stretch reads LVLGREWLRYGR. The chain crosses the membrane as a helical span at residues 41 to 61; the sequence is LLPLDMILISLGASRFCLQLV. Residues 62-88 lie on the Extracellular side of the membrane; that stretch reads GTVHNFYYSAQKVEYSGGLGRQFFHLH. A helical membrane pass occupies residues 89–109; sequence WHFLNSATFWFCSWLSVLFCV. The Cytoplasmic segment spans residues 110 to 129; it reads KIANITHPTFLWLKWRFPAW. Residues 130-150 form a helical membrane-spanning segment; the sequence is VPWLLLGSVLISFIITLLFFW. Residues 151–183 are Extracellular-facing; the sequence is VNYPAYQEFLIRKFSVNMTYKWNTRIETYYFPS. Asparagine 167 is a glycosylation site (N-linked (GlcNAc...) asparagine). The chain crosses the membrane as a helical span at residues 184–204; that stretch reads LKLVIWSIPFSVFLVSIMLLI. The Cytoplasmic portion of the chain corresponds to 205–234; that stretch reads NSLRRHTQRMQHNGHSLQDPSTQAHTRALK. The helical transmembrane segment at 235–255 threads the bilayer; that stretch reads SLISFLILYALSFLSLIIDAT. The Extracellular segment spans residues 256–264; it reads KFISMQNDF. Residues 265-285 traverse the membrane as a helical segment; the sequence is YWPWQIAVYLCISIHPFILIF. Topologically, residues 286–307 are cytoplasmic; that stretch reads SNLKLRSVFSQLLLLARGFWVA.

It belongs to the G-protein coupled receptor T2R family.

Its subcellular location is the membrane. Its function is as follows. Receptor that may play a role in the perception of bitterness and is gustducin-linked. May play a role in sensing the chemical composition of the gastrointestinal content. The activity of this receptor may stimulate alpha gustducin, mediate PLC-beta-2 activation and lead to the gating of TRPM5. The sequence is that of Taste receptor type 2 member 41 (TAS2R41) from Pan paniscus (Pygmy chimpanzee).